A 474-amino-acid polypeptide reads, in one-letter code: Proline--tRNA ligase (474 aa).

The protein belongs to the class-II aminoacyl-tRNA synthetase family. ProS type 3 subfamily. Homodimer.

The protein resides in the cytoplasm. It catalyses the reaction tRNA(Pro) + L-proline + ATP = L-prolyl-tRNA(Pro) + AMP + diphosphate. Functionally, catalyzes the attachment of proline to tRNA(Pro) in a two-step reaction: proline is first activated by ATP to form Pro-AMP and then transferred to the acceptor end of tRNA(Pro). The chain is Proline--tRNA ligase from Mycoplasma capricolum subsp. capricolum (strain California kid / ATCC 27343 / NCTC 10154).